A 137-amino-acid polypeptide reads, in one-letter code: Small ribosomal subunit protein uS11 (137 aa).

Polar residues predominate over residues 1–11 (MPPKSRSTGPK). 2 disordered regions span residues 1 to 28 (MPPK…PHGA) and 117 to 137 (TISD…RRRV). Over residues 12–21 (KTQKARRRDK) the composition is skewed to basic residues.

Belongs to the universal ribosomal protein uS11 family. In terms of assembly, part of the 30S ribosomal subunit. Interacts with proteins S7 and S18. Binds to IF-3.

In terms of biological role, located on the platform of the 30S subunit, it bridges several disparate RNA helices of the 16S rRNA. Forms part of the Shine-Dalgarno cleft in the 70S ribosome. This is Small ribosomal subunit protein uS11 from Rhodococcus opacus (strain B4).